A 337-amino-acid chain; its full sequence is Zinc finger protein 488 (337 aa).

Positions 1-10 are enriched in polar residues; it reads MAAGTSTLLS. 3 disordered regions span residues 1–32, 55–83, and 146–179; these read MAAG…SVEK, SDTA…PRLD, and SAWP…MLLA. The segment at 69–184 is important for transcriptional repression activity; the sequence is TELSLPTAPN…PMLLAGGSAE (116 aa). 2 C2H2-type zinc fingers span residues 272-299 and 314-336; these read NWCA…KREH and LTCP…MASH. The Nuclear localization signal signature appears at 295-302; sequence HKREHVGP.

The protein belongs to the krueppel C2H2-type zinc-finger protein family. In terms of assembly, interacts with OLIG2.

The protein localises to the nucleus. In terms of biological role, transcriptional repressor. Plays a role in oligodendrocyte differentiation, together with OLIG2. Mediates Notch signaling-activated formation of oligodendrocyte precursors. Promotes differentiation of adult neural stem progenitor cells (NSPCs) into mature oligodendrocytes and contributes to remyelination following nerve injury. The protein is Zinc finger protein 488 (Znf488) of Mus musculus (Mouse).